The chain runs to 341 residues: Foldase protein PrsA (341 aa).

The N-terminal stretch at 1-22 (MKNIGRLAVTALIAVFIFSVTG) is a signal peptide. Residue Cys-23 is the site of N-palmitoyl cysteine attachment. The S-diacylglycerol cysteine moiety is linked to residue Cys-23. The region spanning 199-291 (PNKMHLAHIL…FGYHIIKCIK (93 aa)) is the PpiC domain.

It belongs to the PrsA family.

Its subcellular location is the cell membrane. The enzyme catalyses [protein]-peptidylproline (omega=180) = [protein]-peptidylproline (omega=0). Plays a major role in protein secretion by helping the post-translocational extracellular folding of several secreted proteins. The sequence is that of Foldase protein PrsA from Clostridium kluyveri (strain NBRC 12016).